Consider the following 612-residue polypeptide: UvrABC system protein C (612 aa).

Positions 13 to 92 constitute a GIY-YIG domain; that stretch reads AKPGVYIMHD…IKEHRPKYNT (80 aa). In terms of domain architecture, UVR spans 204 to 239; the sequence is KKIMDRLTTQMQEASEKMEYEEAARYRDLLMSVKQV.

Belongs to the UvrC family. As to quaternary structure, interacts with UvrB in an incision complex.

Its subcellular location is the cytoplasm. The UvrABC repair system catalyzes the recognition and processing of DNA lesions. UvrC both incises the 5' and 3' sides of the lesion. The N-terminal half is responsible for the 3' incision and the C-terminal half is responsible for the 5' incision. The sequence is that of UvrABC system protein C from Lachnospira eligens (strain ATCC 27750 / DSM 3376 / VPI C15-48 / C15-B4) (Eubacterium eligens).